Consider the following 214-residue polypeptide: Rhodanese-like domain-containing protein 10 (214 aa).

In terms of domain architecture, Rhodanese spans 58-182 (ASEGYILLDV…VSEGDFPEIE (125 aa)). Residue Cys142 is the Cysteine persulfide intermediate of the active site. The helical transmembrane segment at 190–206 (ATIGGVSFYLLKLLVLL) threads the bilayer.

The protein resides in the membrane. This chain is Rhodanese-like domain-containing protein 10 (STR10), found in Arabidopsis thaliana (Mouse-ear cress).